The sequence spans 249 residues: Aliphatic sulfonates import ATP-binding protein SsuB 2 (249 aa).

The region spanning 15-231 (VHVRDLARRF…DHGDPRFAQF (217 aa)) is the ABC transporter domain. 47-54 (GRSGSGKS) serves as a coordination point for ATP.

This sequence belongs to the ABC transporter superfamily. Aliphatic sulfonates importer (TC 3.A.1.17.2) family. The complex is composed of two ATP-binding proteins (SsuB), two transmembrane proteins (SsuC) and a solute-binding protein (SsuA).

It is found in the cell inner membrane. It catalyses the reaction ATP + H2O + aliphatic sulfonate-[sulfonate-binding protein]Side 1 = ADP + phosphate + aliphatic sulfonateSide 2 + [sulfonate-binding protein]Side 1.. In terms of biological role, part of the ABC transporter complex SsuABC involved in aliphatic sulfonates import. Responsible for energy coupling to the transport system. This is Aliphatic sulfonates import ATP-binding protein SsuB 2 from Rhizobium johnstonii (strain DSM 114642 / LMG 32736 / 3841) (Rhizobium leguminosarum bv. viciae).